Here is a 155-residue protein sequence, read N- to C-terminus: UPF0178 protein mlr0875 (155 aa).

It belongs to the UPF0178 family.

The sequence is that of UPF0178 protein mlr0875 from Mesorhizobium japonicum (strain LMG 29417 / CECT 9101 / MAFF 303099) (Mesorhizobium loti (strain MAFF 303099)).